Here is a 715-residue protein sequence, read N- to C-terminus: MKSRKRQNNMQNETREPAVLSSQETSISRISPQDPEAKFYVGVDVGTGSARACVIDQSGNMLSLAEKPIKREQLISNFITQSSREIWNAVCYCVRTVVEESGVDPERVRGIGFDATCSLVVVSATNFEEIAVGPDFTNNDQNIILWMDHRAMKETEEINSSGDKCLKYVGGQMSVEMEIPKIKWLKNNLEAGIFQDCKFFDLPDYLTFKATGKENRSFCSAVCKQGFLPVGVEGSDIGWSKEFLNSIGLSELTKNDFERLGGSLREKKNFLTAGECISPLDKKAACQLGLTEHCVVSSGIIDAYAGWVGTVAAKPESAVKGLAETENYKKDFNGAIGRLAAVAGTSTCHILLSKNPIFVHGVWGPYRDVLARGFWAAEGGQSCTGVLLDHLITTHPAFTELSHMANLAGVSKFEYLNKILETLVEKRKVRSVISLAKHLFFYGDYHGNRSPIADPNMRACIIGQSMDNSIEDLAVMYLSACEFISQQTRQIIEVMLKSGHEINAIFMSGGQCRNSLLMRLLADCTGLPIVIPRYVDAAVVFGSALLGAAASEDFDYTREKRTLKGQKSSQTKTERFNDSYSSIQKLSMEDRNSTNGFVSPHNLQLSTPSAPAKINNYSLPICTQQPLDKTSEESSKDASLTVGQESLGEGRYNGTSFLWKVMQELTGNARIVNPNEKTHPDRILLDTKYQIFLDMIETQRKYRRMVDKVEGSFSR.

The segment at 1–27 (MKSRKRQNNMQNETREPAVLSSQETSI) is disordered.

The protein belongs to the FGGY kinase family.

The enzyme catalyses D-ribulose + ATP = D-ribulose 5-phosphate + ADP + H(+). The protein operates within carbohydrate metabolism; pentose and glucuronate interconversion. Functionally, catalyzes ATP-dependent phosphorylation of D-ribulose at C-5 to form D-ribulose 5-phosphate. Postulated to function in a metabolite repair mechanism by preventing toxic accumulation of free D-ribulose formed by non-specific phosphatase activities. Alternatively, may play a role in regulating D-ribulose 5-phosphate recycling in the pentose phosphate pathway. The sequence is that of D-ribulokinase YDR109C from Saccharomyces cerevisiae (strain ATCC 204508 / S288c) (Baker's yeast).